The sequence spans 92 residues: Small ribosomal subunit protein uS19 (92 aa).

Belongs to the universal ribosomal protein uS19 family.

Its function is as follows. Protein S19 forms a complex with S13 that binds strongly to the 16S ribosomal RNA. The polypeptide is Small ribosomal subunit protein uS19 (Staphylococcus aureus (strain Mu3 / ATCC 700698)).